We begin with the raw amino-acid sequence, 204 residues long: Ribosome maturation factor RimP (204 aa).

It belongs to the RimP family.

The protein localises to the cytoplasm. In terms of biological role, required for maturation of 30S ribosomal subunits. The protein is Ribosome maturation factor RimP of Allorhizobium ampelinum (strain ATCC BAA-846 / DSM 112012 / S4) (Agrobacterium vitis (strain S4)).